The primary structure comprises 96 residues: uncharacterized protein (96 aa).

3 helical membrane-spanning segments follow: residues Phe2–Phe22, Ala38–Leu58, and Leu68–Val88.

It is found in the membrane. This is an uncharacterized protein from Schizosaccharomyces pombe (strain 972 / ATCC 24843) (Fission yeast).